Here is a 777-residue protein sequence, read N- to C-terminus: Disintegrin and metalloproteinase domain-containing protein 5 (777 aa).

An N-terminal signal peptide occupies residues 1-16 (MFLVLVLLTGLGRLYA). Positions 17-142 (GNNPRKTFVQ…VLSGFTHMIY (126 aa)) are excised as a propeptide. Residues 17–706 (GNNPRKTFVQ…RGYVVLSTKR (690 aa)) are Extracellular-facing. 2 N-linked (GlcNAc...) asparagine glycosylation sites follow: asparagine 49 and asparagine 123. The region spanning 185–382 (RYIDMYIVVN…YGLTCLRNTS (198 aa)) is the Peptidase M12B domain. Intrachain disulfides connect cysteine 294–cysteine 377, cysteine 336–cysteine 361, cysteine 338–cysteine 343, and cysteine 456–cysteine 477. One can recognise a Disintegrin domain in the interval 396–485 (RRICGNSIRE…DCVHDTYAQN (90 aa)). Asparagine 566 carries an N-linked (GlcNAc...) asparagine glycan. The EGF-like domain occupies 633–667 (NNGSCNAEIHCQGRGICNNLDNCHCHKGFVPPECA). Cystine bridges form between cysteine 637-cysteine 649, cysteine 643-cysteine 655, and cysteine 657-cysteine 666. A helical membrane pass occupies residues 707-727 (FQLIFYIGIPVIIIVAAILIK). The Cytoplasmic portion of the chain corresponds to 728–777 (QNQLGKLFCRGEKEHMSSVSEDGSRSVTLSATESKFPADTEHSNKEEDAQ). Polar residues predominate over residues 744–760 (SSVSEDGSRSVTLSATE). The tract at residues 744 to 777 (SSVSEDGSRSVTLSATESKFPADTEHSNKEEDAQ) is disordered. The span at 763 to 777 (FPADTEHSNKEEDAQ) shows a compositional bias: basic and acidic residues.

Interacts with TEX101. Post-translationally, subject to proteolytic processing during epididymal transit of spermatozoa. As to expression, detected in testis.

It is found in the membrane. In terms of biological role, this is a non catalytic metalloprotease-like protein. May play a role in sperm-egg fusion. The chain is Disintegrin and metalloproteinase domain-containing protein 5 (ADAM5) from Cavia porcellus (Guinea pig).